We begin with the raw amino-acid sequence, 320 residues long: Ferrochelatase (320 aa).

His194 and Glu275 together coordinate Fe cation.

The protein belongs to the ferrochelatase family.

It localises to the cytoplasm. It carries out the reaction heme b + 2 H(+) = protoporphyrin IX + Fe(2+). It participates in porphyrin-containing compound metabolism; protoheme biosynthesis; protoheme from protoporphyrin-IX: step 1/1. Catalyzes the ferrous insertion into protoporphyrin IX. The protein is Ferrochelatase of Cronobacter sakazakii (strain ATCC BAA-894) (Enterobacter sakazakii).